The following is a 403-amino-acid chain: S-adenosylmethionine synthase (403 aa).

141-146 (GQGSVD) is an ATP binding site.

It belongs to the AdoMet synthase 2 family. It depends on Mg(2+) as a cofactor.

It catalyses the reaction L-methionine + ATP + H2O = S-adenosyl-L-methionine + phosphate + diphosphate. Its pathway is amino-acid biosynthesis; S-adenosyl-L-methionine biosynthesis; S-adenosyl-L-methionine from L-methionine: step 1/1. Functionally, catalyzes the formation of S-adenosylmethionine from methionine and ATP. This chain is S-adenosylmethionine synthase, found in Methanococcus aeolicus (strain ATCC BAA-1280 / DSM 17508 / OCM 812 / Nankai-3).